Consider the following 708-residue polypeptide: Leukotoxin translocation ATP-binding protein LktB (708 aa).

The Peptidase C39 domain maps to 1 to 126; that stretch reads MEANHQRNDL…ACYQGQLILV (126 aa). In terms of domain architecture, ABC transmembrane type-1 spans 155-437; it reads FLETLIVSIF…LAQLWQDFQQ (283 aa). 5 helical membrane passes run 159 to 179, 192 to 212, 270 to 290, 296 to 316, and 389 to 409; these read LIVS…FQVV, LNII…LSGL, ALTS…MWYY, LVIL…SPIL, and VMVI…LSIG. The 236-residue stretch at 469–704 folds into the ABC transporter domain; the sequence is ISFKNIRFRY…SNGLYSYLHQ (236 aa). 503–510 contacts ATP; sequence GRSGSGKS.

This sequence belongs to the ABC transporter superfamily. Protein-1 exporter (TC 3.A.1.109) family. Homodimer.

The protein localises to the cell inner membrane. It catalyses the reaction ATP + H2O + proteinSide 1 = ADP + phosphate + proteinSide 2.. Its function is as follows. Part of the ABC transporter complex LktBD involved in leukotoxin export. Transmembrane domains (TMD) form a pore in the inner membrane and the ATP-binding domain (NBD) is responsible for energy generation. The sequence is that of Leukotoxin translocation ATP-binding protein LktB (lktB) from Bibersteinia trehalosi (Pasteurella trehalosi).